A 401-amino-acid polypeptide reads, in one-letter code: Argininosuccinate synthase (401 aa).

9–17 is a binding site for ATP; it reads AYSGGLDTS. Position 88 (Y88) interacts with L-citrulline. Position 118 (G118) interacts with ATP. Residues T120, N124, and D125 each contribute to the L-aspartate site. Residue N124 coordinates L-citrulline. L-citrulline-binding residues include R128, S177, S186, E262, and Y274.

It belongs to the argininosuccinate synthase family. Type 1 subfamily. In terms of assembly, homotetramer.

It is found in the cytoplasm. The enzyme catalyses L-citrulline + L-aspartate + ATP = 2-(N(omega)-L-arginino)succinate + AMP + diphosphate + H(+). It participates in amino-acid biosynthesis; L-arginine biosynthesis; L-arginine from L-ornithine and carbamoyl phosphate: step 2/3. In Chlorobaculum tepidum (strain ATCC 49652 / DSM 12025 / NBRC 103806 / TLS) (Chlorobium tepidum), this protein is Argininosuccinate synthase.